We begin with the raw amino-acid sequence, 246 residues long: Aquaporin AqpM (246 aa).

The Cytoplasmic segment spans residues 1 to 11 (MVSLTKRCIAE). The chain crosses the membrane as a helical span at residues 12–32 (FIGTFFLVFFGAGAAAITLMI). Residues 33–45 (ASGGTAPNPFNIG) lie on the Extracellular side of the membrane. Residues 46 to 66 (IGLLGGLGDWVAIGLAFGFAI) traverse the membrane as a helical segment. Residues 67 to 69 (AAS) lie on the Cytoplasmic side of the membrane. A helical membrane pass occupies residues 70-90 (IYALGNISGCHINPAVTIGLW). Residues 82 to 84 (NPA) carry the NPA 1 motif. Residues 91-103 (SVKKFPGRDVVPY) are Extracellular-facing. The helical transmembrane segment at 104 to 124 (IIAQLLGAAFASFIFLQCAGI) threads the bilayer. The Cytoplasmic portion of the chain corresponds to 125–145 (TAATIGGLGATAPFPGIGYWQ). The chain crosses the membrane as a helical span at residues 146–166 (AMLAETVGTFLLMITIMGIAV). Residues 167–172 (DERAPK) lie on the Extracellular side of the membrane. Residues 173 to 193 (GFAGIIIGLTVAGIITTIGNI) form a helical membrane-spanning segment. At 194-217 (TGSSLNPARTFGPYLNDMVFAGTN) the chain is on the cytoplasmic side. The NPA 2 signature appears at 199 to 201 (NPA). The chain crosses the membrane as a helical span at residues 218–238 (LWNYFPIYVIGPVVGAVLAAL). Over 239–246 (TYQYLTSE) the chain is Extracellular.

It belongs to the MIP/aquaporin (TC 1.A.8) family. As to quaternary structure, homotetramer.

Its subcellular location is the cell membrane. Functionally, channel that permits osmotically driven movement of water in both directions. It mediates rapid entry or exit of water in response to abrupt changes in osmolarity. Also exhibits a transient but reproducible increase in the initial glycerol flux. The chain is Aquaporin AqpM (aqpM) from Methanothermobacter thermautotrophicus (strain ATCC 29096 / DSM 1053 / JCM 10044 / NBRC 100330 / Delta H) (Methanobacterium thermoautotrophicum).